A 484-amino-acid polypeptide reads, in one-letter code: Polyamine oxidase 3 (484 aa).

FAD is bound by residues glutamate 47, arginine 55, valine 236, and glutamate 423. The Microbody targeting signal motif lies at 482 to 484; sequence SRL.

It belongs to the flavin monoamine oxidase family. FAD serves as cofactor. Widely expressed.

The protein localises to the peroxisome. It catalyses the reaction spermine + O2 + H2O = 3-aminopropanal + spermidine + H2O2. The enzyme catalyses N(1)-acetylspermine + O2 + H2O = 3-acetamidopropanal + spermidine + H2O2. The catalysed reaction is norspermine + O2 + H2O = norspermidine + 3-aminopropanal + H2O2. It carries out the reaction spermidine + O2 + H2O = 3-aminopropanal + putrescine + H2O2. It catalyses the reaction thermospermine + O2 + H2O = 3-aminopropanal + spermidine + H2O2. Its pathway is amine and polyamine degradation; spermine degradation. The protein operates within amine and polyamine degradation; spermidine degradation. Functionally, flavoenzyme involved in polyamine back-conversion. Catalyzes the oxidation of the secondary amino group of polyamines, such as spermine, spermidine and their acetyl derivatives. Substrate preference is spermidine &gt; norspermine &gt; thermospermine &gt; N(1)-acetylspermine &gt; spermine. No activity detected when putrescine is used as substrate. Plays an important role in the regulation of polyamine intracellular concentration. The sequence is that of Polyamine oxidase 3 from Oryza sativa subsp. japonica (Rice).